The sequence spans 271 residues: Phosphate import ATP-binding protein PstB (271 aa).

Residues 25 to 266 (FDTKNLNLWY…PSDKRTEDYI (242 aa)) enclose the ABC transporter domain. Position 57 to 64 (57 to 64 (GPSGCGKS)) interacts with ATP.

Belongs to the ABC transporter superfamily. Phosphate importer (TC 3.A.1.7) family. The complex is composed of two ATP-binding proteins (PstB), two transmembrane proteins (PstC and PstA) and a solute-binding protein (PstS).

The protein localises to the cell membrane. The catalysed reaction is phosphate(out) + ATP + H2O = ADP + 2 phosphate(in) + H(+). In terms of biological role, part of the ABC transporter complex PstSACB involved in phosphate import. Responsible for energy coupling to the transport system. The sequence is that of Phosphate import ATP-binding protein PstB from Bacillus cereus (strain ATCC 14579 / DSM 31 / CCUG 7414 / JCM 2152 / NBRC 15305 / NCIMB 9373 / NCTC 2599 / NRRL B-3711).